The sequence spans 475 residues: Sensor histidine kinase GlrK (475 aa).

Residues 1–13 (MKRWPVFPRSLRQ) are Cytoplasmic-facing. Residues 14 to 34 (LVMLAFLLILLPLLVLAWQAW) traverse the membrane as a helical segment. The Periplasmic segment spans residues 35–173 (QSLNALSDQA…LQREIAERGQ (139 aa)). A helical membrane pass occupies residues 174 to 194 (YFGWQSLVLFLVSLVMVLLFT). Residues 195–475 (RMIIGPVKNI…IELPSSKNTK (281 aa)) lie on the Cytoplasmic side of the membrane. The Histidine kinase domain occupies 256–472 (HLSHELKTPL…CFRIELPSSK (217 aa)). His259 is modified (phosphohistidine; by autocatalysis).

Autophosphorylated.

The protein localises to the cell inner membrane. The enzyme catalyses ATP + protein L-histidine = ADP + protein N-phospho-L-histidine.. Functionally, member of the two-component regulatory system GlrR/GlrK that up-regulates transcription of the glmY sRNA when cells enter the stationary growth phase. Activates GlrR by phosphorylation. In Escherichia coli (strain K12), this protein is Sensor histidine kinase GlrK (glrK).